Consider the following 595-residue polypeptide: NADH-quinone oxidoreductase subunit C/D (595 aa).

The tract at residues 1–186 (MVTDNSKATD…TPYFLNNAKQ (186 aa)) is NADH dehydrogenase I subunit C. An NADH dehydrogenase I subunit D region spans residues 210–595 (DFMFLNLGPN…IDIVMADTDR (386 aa)).

The protein in the N-terminal section; belongs to the complex I 30 kDa subunit family. In the C-terminal section; belongs to the complex I 49 kDa subunit family. As to quaternary structure, NDH-1 is composed of 13 different subunits. Subunits NuoB, CD, E, F, and G constitute the peripheral sector of the complex.

Its subcellular location is the cell inner membrane. The enzyme catalyses a quinone + NADH + 5 H(+)(in) = a quinol + NAD(+) + 4 H(+)(out). In terms of biological role, NDH-1 shuttles electrons from NADH, via FMN and iron-sulfur (Fe-S) centers, to quinones in the respiratory chain. The immediate electron acceptor for the enzyme in this species is believed to be ubiquinone. Couples the redox reaction to proton translocation (for every two electrons transferred, four hydrogen ions are translocated across the cytoplasmic membrane), and thus conserves the redox energy in a proton gradient. The polypeptide is NADH-quinone oxidoreductase subunit C/D (Psychrobacter sp. (strain PRwf-1)).